Consider the following 264-residue polypeptide: Myozenin-2 (264 aa).

Residue Arg-53 is modified to Omega-N-methylarginine. The segment at 90-135 (GRVDGSNLEGGSQQGPSTPPNTPDPRSPPNPENIAPGYSGPLKEIP) is disordered. A Phosphoserine modification is found at Ser-101. Positions 106–120 (STPPNTPDPRSPPNP) are enriched in pro residues. Thr-107 and Thr-111 each carry phosphothreonine. Position 116 is a phosphoserine (Ser-116).

The protein belongs to the myozenin family. As to quaternary structure, interacts via its C-terminus with spectrin repeats 3 and 4 of ACTN2. Interacts with ACTN1, LDB3, MYOT and PPP3CA. In terms of tissue distribution, expressed specifically in heart and skeletal muscle. In skeletal muscle, localized to the soleus and plantaris muscles, which are predominantly composed of slow-twitch fibers.

The protein resides in the cytoplasm. The protein localises to the myofibril. It is found in the sarcomere. Its subcellular location is the z line. Functionally, myozenins may serve as intracellular binding proteins involved in linking Z line proteins such as alpha-actinin, gamma-filamin, TCAP/telethonin, LDB3/ZASP and localizing calcineurin signaling to the sarcomere. Plays an important role in the modulation of calcineurin signaling. May play a role in myofibrillogenesis. The sequence is that of Myozenin-2 from Mus musculus (Mouse).